The chain runs to 217 residues: Probable GTP-binding protein EngB (217 aa).

The EngB-type G domain maps to 33 to 217 (GPTEIAFAGR…RAAIELAVAR (185 aa)). GTP-binding positions include 41 to 48 (GRSNVGKS), 68 to 72 (GRTQE), 95 to 98 (DMPG), 162 to 165 (TKTD), and 196 to 198 (TSS). Positions 48 and 70 each coordinate Mg(2+).

The protein belongs to the TRAFAC class TrmE-Era-EngA-EngB-Septin-like GTPase superfamily. EngB GTPase family. Mg(2+) is required as a cofactor.

In terms of biological role, necessary for normal cell division and for the maintenance of normal septation. The chain is Probable GTP-binding protein EngB from Sinorhizobium medicae (strain WSM419) (Ensifer medicae).